Here is a 699-residue protein sequence, read N- to C-terminus: UvrABC system protein B (699 aa).

A Helicase ATP-binding domain is found at 35–188; it reads ERINNGEKDV…DHLLRKFVSM (154 aa). An ATP-binding site is contributed by 48–55; the sequence is GATGTGKS. The Beta-hairpin motif lies at 101-124; that stretch reads YYDYYQPEAYVAQTDTFIEKDSSI. The region spanning 438-604 is the Helicase C-terminal domain; it reads QIDDLLGEIR…PLRKKIADIT (167 aa). One can recognise a UVR domain in the interval 654–689; that stretch reads VGLIEQLTEQMHGAAAELQFEVAARIRDEVKELKRE.

Belongs to the UvrB family. Forms a heterotetramer with UvrA during the search for lesions. Interacts with UvrC in an incision complex.

The protein resides in the cytoplasm. Its function is as follows. The UvrABC repair system catalyzes the recognition and processing of DNA lesions. A damage recognition complex composed of 2 UvrA and 2 UvrB subunits scans DNA for abnormalities. Upon binding of the UvrA(2)B(2) complex to a putative damaged site, the DNA wraps around one UvrB monomer. DNA wrap is dependent on ATP binding by UvrB and probably causes local melting of the DNA helix, facilitating insertion of UvrB beta-hairpin between the DNA strands. Then UvrB probes one DNA strand for the presence of a lesion. If a lesion is found the UvrA subunits dissociate and the UvrB-DNA preincision complex is formed. This complex is subsequently bound by UvrC and the second UvrB is released. If no lesion is found, the DNA wraps around the other UvrB subunit that will check the other stand for damage. This chain is UvrABC system protein B, found in Paenarthrobacter aurescens (strain TC1).